Reading from the N-terminus, the 540-residue chain is Tyrosine-protein kinase transforming protein erbB (540 aa).

In terms of domain architecture, Protein kinase spans 132–399; the sequence is FKKVKVLGFG…KMARDPPRYL (268 aa). Residues 138-146 and Lys165 each bind ATP; that span reads LGFGAFGTV. Catalysis depends on Asp257, which acts as the Proton acceptor.

The protein belongs to the protein kinase superfamily. Tyr protein kinase family. EGF receptor subfamily.

It catalyses the reaction L-tyrosyl-[protein] + ATP = O-phospho-L-tyrosyl-[protein] + ADP + H(+). In Avian erythroblastosis virus (strain ts167), this protein is Tyrosine-protein kinase transforming protein erbB (V-ERBB).